A 244-amino-acid polypeptide reads, in one-letter code: Probable cytokinin riboside 5'-monophosphate phosphoribohydrolase LOGL2 (244 aa).

Residues glutamate 91, 109–110 (RK), and 126–132 (GYGTLEE) each bind substrate.

Belongs to the LOG family.

The catalysed reaction is N(6)-(dimethylallyl)adenosine 5'-phosphate + H2O = N(6)-dimethylallyladenine + D-ribose 5-phosphate. The enzyme catalyses 9-ribosyl-trans-zeatin 5'-phosphate + H2O = trans-zeatin + D-ribose 5-phosphate. Functionally, cytokinin-activating enzyme working in the direct activation pathway. Phosphoribohydrolase that converts inactive cytokinin nucleotides to the biologically active free-base forms. This chain is Probable cytokinin riboside 5'-monophosphate phosphoribohydrolase LOGL2 (LOGL2), found in Oryza sativa subsp. japonica (Rice).